Consider the following 94-residue polypeptide: UPF0213 protein BH0048 (94 aa).

Positions 1–76 (MNHYVYILEC…KHLSRRKKEQ (76 aa)) constitute a GIY-YIG domain.

This sequence belongs to the UPF0213 family.

In Halalkalibacterium halodurans (strain ATCC BAA-125 / DSM 18197 / FERM 7344 / JCM 9153 / C-125) (Bacillus halodurans), this protein is UPF0213 protein BH0048.